The primary structure comprises 301 residues: MSEPFKSGFVAIVGRPNVGKSTLLNHIIGQKIAIMSDKAQTTRNKVQGVYTTDESQIIFIDTPGIHKPKHKLGDFMVKIALNTFQEVDLIYFVIDASTGFGRGDEFIIEKLKNVQTPVFLLINKIDLISPEDLFKLIEQYRELLDFEEIIPISALQGNNVPNLLEQTNANLEIGPMYYPKDQITDHPERFIISELIREQVLQLTREEVPHSVAVVIEGIEKNPKTEKLTINATIIVERSTQKGIIIGKQGQMLKQIGMRARKEIESLLGSKVFLEIWVKVQKNWRDKEHYLHDYGFDREEY.

Residues 6 to 173 (KSGFVAIVGR…LEQTNANLEI (168 aa)) form the Era-type G domain. The G1 stretch occupies residues 14–21 (GRPNVGKS). 14 to 21 (GRPNVGKS) provides a ligand contact to GTP. Residues 40-44 (QTTRN) form a G2 region. The interval 61 to 64 (DTPG) is G3. Residues 61 to 65 (DTPGI) and 123 to 126 (NKID) contribute to the GTP site. The tract at residues 123–126 (NKID) is G4. The interval 152–154 (ISA) is G5. The KH type-2 domain maps to 204-282 (TREEVPHSVA…FLEIWVKVQK (79 aa)).

The protein belongs to the TRAFAC class TrmE-Era-EngA-EngB-Septin-like GTPase superfamily. Era GTPase family. Monomer.

The protein resides in the cytoplasm. The protein localises to the cell membrane. In terms of biological role, an essential GTPase that binds both GDP and GTP, with rapid nucleotide exchange. Plays a role in 16S rRNA processing and 30S ribosomal subunit biogenesis and possibly also in cell cycle regulation and energy metabolism. This is GTPase Era from Listeria welshimeri serovar 6b (strain ATCC 35897 / DSM 20650 / CCUG 15529 / CIP 8149 / NCTC 11857 / SLCC 5334 / V8).